Reading from the N-terminus, the 490-residue chain is AP-5 complex subunit mu-1 (490 aa).

One can recognise an MHD domain in the interval 206-476 (KPQVSISITE…LISSDYYIWN (271 aa)).

The protein belongs to the adaptor complexes medium subunit family. As to quaternary structure, probably part of the adaptor protein complex 5 (AP-5) a tetramer composed of AP5B1, AP5M1, AP5S1 and AP5Z1.

It localises to the cytoplasm. The protein localises to the cytosol. The protein resides in the late endosome membrane. It is found in the lysosome membrane. Its function is as follows. As part of AP-5, a probable fifth adaptor protein complex it may be involved in endosomal transport. The chain is AP-5 complex subunit mu-1 (AP5M1) from Bos taurus (Bovine).